We begin with the raw amino-acid sequence, 124 residues long: 5-hydroxyisourate hydrolase (124 aa).

Substrate is bound by residues His15, Arg53, and Tyr121.

The protein belongs to the transthyretin family. 5-hydroxyisourate hydrolase subfamily. In terms of assembly, homotetramer.

It catalyses the reaction 5-hydroxyisourate + H2O = 5-hydroxy-2-oxo-4-ureido-2,5-dihydro-1H-imidazole-5-carboxylate + H(+). Catalyzes the hydrolysis of 5-hydroxyisourate (HIU) to 2-oxo-4-hydroxy-4-carboxy-5-ureidoimidazoline (OHCU). The polypeptide is 5-hydroxyisourate hydrolase (Mesorhizobium japonicum (strain LMG 29417 / CECT 9101 / MAFF 303099) (Mesorhizobium loti (strain MAFF 303099))).